Here is a 410-residue protein sequence, read N- to C-terminus: Peptidase T (410 aa).

Position 77 (H77) interacts with Zn(2+). The active site involves D79. D140 provides a ligand contact to Zn(2+). E174 functions as the Proton acceptor in the catalytic mechanism. Positions 175, 197, and 379 each coordinate Zn(2+).

It belongs to the peptidase M20B family. Zn(2+) serves as cofactor.

It is found in the cytoplasm. It catalyses the reaction Release of the N-terminal residue from a tripeptide.. In terms of biological role, cleaves the N-terminal amino acid of tripeptides. The protein is Peptidase T of Desulfitobacterium hafniense (strain DSM 10664 / DCB-2).